The chain runs to 127 residues: DNA-directed RNA polymerases I, II, and III subunit RPABC2 (127 aa).

The span at 1 to 34 (MSDNEDNFDGDDFDDVEEDEGLDDLENAEEEGQE) shows a compositional bias: acidic residues. The interval 1–53 (MSDNEDNFDGDDFDDVEEDEGLDDLENAEEEGQENVEILPSGERPQANQKRIT) is disordered. Serine 2 bears the N-acetylserine mark. A Phosphoserine; by CK2 modification is found at serine 2.

Belongs to the archaeal Rpo6/eukaryotic RPB6 RNA polymerase subunit family. Component of the RNA polymerase I (Pol I), RNA polymerase II (Pol II) and RNA polymerase III (Pol III) complexes consisting of at least 13, 12 and 17 subunits, respectively. Pol I complex consists of a ten-subunit catalytic core composed of POLR1A/RPA1, POLR1B/RPA2, POLR1C/RPAC1, POLR1D/RPAC2, POLR1H/RPA12, POLR2E/RPABC1, POLR2F/RPABC2, POLR2H/RPABC3, POLR2K/RPABC4 and POLR2L/RPABC5; a mobile stalk subunit POLR1F/RPA43 protruding from the core and additional subunits homologous to general transcription factors POLR1E/RPA49 and POLR1G/RPA34. Part of Pol I pre-initiation complex (PIC), in which Pol I core assembles with RRN3 and promoter-bound UTBF and SL1/TIF-IB complex. Pol II complex contains a ten-subunit catalytic core composed of POLR2A/RPB1, POLR2B/RPB2, POLR2C/RPB3, POLR2I/RPB9, POLR2J/RPB11, POLR2E/RPABC1, POLR2F/RPABC2, POLR2H/RPABC3, POLR2K/RPABC4 and POLR2L/RPABC5 and a mobile stalk composed of two subunits POLR2D/RPB4 and POLR2G/RPB7. Part of Pol II(G) complex, in which Pol II core associates with an additional subunit POLR2M; unlike conventional Pol II, Pol II(G) functions as a transcriptional repressor. Part of TBP-based Pol II pre-initiation complex (PIC), in which Pol II core assembles with general transcription factors and other specific initiation factors including GTF2E1, GTF2E2, GTF2F1, GTF2F2, TCEA1, ERCC2, ERCC3, GTF2H2, GTF2H3, GTF2H4, GTF2H5, GTF2A1, GTF2A2, GTF2B and TBP; this large multi-subunit PIC complex mediates DNA unwinding and targets Pol II core to the transcription start site where the first phosphodiester bond forms. Pol III complex consists of a ten-subunit catalytic core composed of POLR3A/RPC1, POLR3B/RPC2, POLR1C/RPAC1, POLR1D/RPAC2, POLR3K/RPC10, POLR2E/RPABC1, POLR2F/RPABC2, POLR2H/RPABC3, POLR2K/RPABC4 and POLR2L/RPABC5; a mobile stalk composed of two subunits POLR3H/RPC8 and CRCP/RPC9, protruding from the core and functioning primarily in transcription initiation; and additional subunits homologous to general transcription factors of the RNA polymerase II machinery, POLR3C/RPC3-POLR3F/RPC6-POLR3G/RPC7 heterotrimer required for transcription initiation and POLR3D/RPC4-POLR3E/RPC5 heterodimer involved in both transcription initiation and termination.

Its subcellular location is the nucleus. It localises to the nucleolus. Functionally, DNA-dependent RNA polymerase catalyzes the transcription of DNA into RNA using the four ribonucleoside triphosphates as substrates. Common component of RNA polymerases I, II, and III which synthesize ribosomal RNA precursors, mRNA precursors and many functional non-coding RNAs, and small RNAs, such as 5S rRNA and tRNAs, respectively. Pol II is the central component of the basal RNA polymerase II transcription machinery. Pols are composed of mobile elements that move relative to each other. In Pol II, POLR2F/RPABC2 is part of the clamp element and together with parts of POLR2A/RPB1 and POLR2B/RPB2 forms a pocket to which the POLR2D/RPB4-POLR2G/RPB7 subcomplex binds. In Homo sapiens (Human), this protein is DNA-directed RNA polymerases I, II, and III subunit RPABC2.